The following is a 299-amino-acid chain: Protoheme IX farnesyltransferase (299 aa).

The next 9 helical transmembrane spans lie at 29-49 (VVTL…PGAV), 51-71 (LQPL…AAAM), 100-120 (HAAT…YWLV), 123-143 (LTAW…TAYL), 150-170 (NIVI…TAVT), 177-197 (GLLL…ALAI), 223-243 (CIFL…LVGM), 244-264 (SGAL…YKAW), and 275-295 (AMDV…LLLV).

Belongs to the UbiA prenyltransferase family. Protoheme IX farnesyltransferase subfamily.

It is found in the cell inner membrane. It carries out the reaction heme b + (2E,6E)-farnesyl diphosphate + H2O = Fe(II)-heme o + diphosphate. Its pathway is porphyrin-containing compound metabolism; heme O biosynthesis; heme O from protoheme: step 1/1. Functionally, converts heme B (protoheme IX) to heme O by substitution of the vinyl group on carbon 2 of heme B porphyrin ring with a hydroxyethyl farnesyl side group. The polypeptide is Protoheme IX farnesyltransferase (Shewanella amazonensis (strain ATCC BAA-1098 / SB2B)).